A 469-amino-acid polypeptide reads, in one-letter code: Peripherin (469 aa).

2 stretches are compositionally biased toward low complexity: residues 1–18 (MSHP…SYRR) and 27–53 (SPGA…PGSS). The segment at 1 to 60 (MSHPSGLRSSVSSTSYRRTFGPPPSLSPGAFSYSSSSRFSSSRLLGSASPGSSVRLGSFR) is disordered. Residues 1–98 (MSHPSGLRSS…FLATRSNEKQ (98 aa)) are head. Y16 is subject to 3'-nitrotyrosine. Phosphoserine is present on residues S27, S49, and S58. Positions 96-406 (EKQELQELND…KLLEGEESRI (311 aa)) constitute an IF rod domain. The segment at 99-131 (ELQELNDRFANFIEKVRFLEQQNAALRGELNQA) is coil 1A. Residues 132–142 (RGQEPARADQL) form a linker 1 region. Positions 143 to 238 (CQQELRELRR…KLHEEELRDL (96 aa)) are coil 1B. A linker 2 region spans residues 239 to 261 (QLSVESQQVQHVEVEATVKPELT). The tract at residues 262-404 (AALRDIRAQY…YRKLLEGEES (143 aa)) is coil 2. The residue at position 378 (Y378) is a 3'-nitrotyrosine. The tract at residues 405 to 469 (RISVPVHSFA…SELDKSPQSY (65 aa)) is tail. The interval 447–469 (GEQVVTESQKEQHSELDKSPQSY) is disordered. Y469 carries the phosphotyrosine modification.

Belongs to the intermediate filament family. As to quaternary structure, forms homodimers (in vitro). Homopolymerizes into a filamentous network (in vitro). Forms heterodimers with NEFL, NEFM or NEFH (in vitro). Interacts with DST (via C-terminus). Interacts with RAB7A; the interaction is direct. Interacts with PRKCE (via phorbol-ester/DAG-type 2 domain). Phosphorylated; phosphorylation increases after nerve injury in regenerating neurons.

It localises to the cytoplasm. The protein resides in the cytoskeleton. The protein localises to the cell projection. It is found in the axon. Its subcellular location is the perikaryon. Functionally, class-III neuronal intermediate filament protein. May form an independent structural network without the involvement of other neurofilaments or may cooperate with the neuronal intermediate filament proteins NEFL, NEFH, NEFM and INA to form a filamentous network. Assembly of the neuronal intermediate filaments may be regulated by RAB7A. Plays a role in the development of unmyelinated sensory neurons. May be involved in axon elongation and axon regeneration after injury. Inhibits neurite extension in type II spiral ganglion neurons in the cochlea. This Bos taurus (Bovine) protein is Peripherin (PRPH).